A 1257-amino-acid chain; its full sequence is Phosphatidylinositol 3,4,5-trisphosphate 5-phosphatase 2 (1257 aa).

Residues 21–117 (WYHRDLSRAA…GLVCALLLPV (97 aa)) form the SH2 domain. A compositionally biased stretch (basic and acidic residues) spans 119-132 (GEREPDPPDDRDAS). The segment at 119–181 (GEREPDPPDD…ESTPNGLSTV (63 aa)) is disordered. A Phosphoserine modification is found at serine 132. A compositionally biased stretch (pro residues) spans 156-166 (PSSPLPAPETP). At threonine 165 the chain carries Phosphothreonine. Phosphoserine is present on residues serine 241 and serine 353. Position 887 is a phosphotyrosine (tyrosine 887). The residue at position 891 (serine 891) is a Phosphoserine. The tract at residues 897–986 (TGAKSKAPSV…PPKNSFNNPA (90 aa)) is disordered. A compositionally biased stretch (pro residues) spans 939 to 951 (PPPTGRPPAPPRA). Positions 945 to 950 (PPAPPR) match the SH3-binding motif. Over residues 952–966 (VPREESLNPRLKSEG) the composition is skewed to basic and acidic residues. Residues 984–987 (NPAY) carry the NPXY motif motif. The residue at position 987 (tyrosine 987) is a Phosphotyrosine. Positions 1004-1115 (SFARAPIPPT…PASTFLEEVA (112 aa)) are disordered. Pro residues-rich tracts occupy residues 1049–1060 (LPPPDFPPPPLP) and 1088–1104 (GPPPPKAHPRPPLPPGT). Serine 1132 bears the Phosphoserine mark. Tyrosine 1136 and tyrosine 1161 each carry phosphotyrosine. The 63-residue stretch at 1195–1257 (LGEAGMGAWL…LLLDTLQLSK (63 aa)) folds into the SAM domain. Residue serine 1256 is modified to Phosphoserine.

It belongs to the inositol 1,4,5-trisphosphate 5-phosphatase family. As to quaternary structure, interacts with tyrosine phosphorylated form of SHC1. Interacts with EGFR. Upon stimulation by the EGF signaling pathway, it forms a complex with SHC1 and EGFR. Interacts with cytoskeletal protein SORBS3/vinexin, promoting its localization to the periphery of cells. Forms a complex with filamin (FLNA or FLNB), actin, GPIb (GP1BA or GP1BB) that regulates cortical and submembraneous actin. Interacts with c-Met/MET, when c-Met/MET is phosphorylated on 'Tyr-1356'. Interacts with p130Cas/BCAR1. Interacts with CENTD3/ARAP3 via its SAM domain. Interacts with c-Cbl/CBL and CAP/SORBS1. Interacts with activated EPHA2 receptor. Interacts with receptors FCGR2A. Interacts with FCGR2B. Interacts with tyrosine kinase ABL1. Interacts with tyrosine kinase TEC. Interacts with CSF1R. Interacts (via N-terminus) with SH3YL1 (via SH3 domain). Interacts (via SH2 domain) with tyrosine phosphorylated KLRC1 (via ITIM). Interacts with NEDD9/HEF1. Tyrosine phosphorylated by the members of the SRC family after exposure to a diverse array of extracellular stimuli such as insulin, growth factors such as EGF or PDGF, chemokines, integrin ligands and hypertonic and oxidative stress. May be phosphorylated upon IgG receptor FCGR2B-binding. Phosphorylated at Tyr-987 following cell attachment and spreading. Phosphorylated at Tyr-1161 following EGF signaling pathway stimulation.

The protein resides in the cytoplasm. The protein localises to the cytosol. It localises to the cytoskeleton. Its subcellular location is the membrane. It is found in the cell projection. The protein resides in the filopodium. The protein localises to the lamellipodium. It localises to the basal cell membrane. Its subcellular location is the nucleus. It is found in the nucleus speckle. The protein resides in the spindle pole. It catalyses the reaction a 1,2-diacyl-sn-glycero-3-phospho-(1D-myo-inositol-3,4,5-trisphosphate) + H2O = a 1,2-diacyl-sn-glycero-3-phospho-(1D-myo-inositol-3,4-bisphosphate) + phosphate. The catalysed reaction is 1,2-dioctanoyl-sn-glycero-3-phospho-(1D-myo-inositol-3,4,5-trisphosphate) + H2O = 1,2-dioctanoyl-sn-glycero-3-phospho-(1D-myo-inositol-3,4-bisphosphate) + phosphate. The enzyme catalyses 1,2-dihexadecanoyl-sn-glycero-3-phospho-(1D-myo-inositol-3,4,5-trisphosphate) + H2O = 1,2-dihexadecanoyl-sn-glycero-3-phospho-(1D-myo-inositol-3,4-bisphosphate) + phosphate. Activated upon translocation to the sites of synthesis of PtdIns(3,4,5)P3 in the membrane. Enzymatic activity is enhanced in the presence of phosphatidylserine. Functionally, phosphatidylinositol (PtdIns) phosphatase that specifically hydrolyzes the 5-phosphate of phosphatidylinositol-3,4,5-trisphosphate (PtdIns(3,4,5)P3) to produce PtdIns(3,4)P2, thereby negatively regulating the PI3K (phosphoinositide 3-kinase) pathways. Required for correct mitotic spindle orientation and therefore progression of mitosis. Plays a central role in regulation of PI3K-dependent insulin signaling, although the precise molecular mechanisms and signaling pathways remain unclear. While overexpression reduces both insulin-stimulated MAP kinase and Akt activation, its absence does not affect insulin signaling or GLUT4 trafficking. Confers resistance to dietary obesity. May act by regulating AKT2, but not AKT1, phosphorylation at the plasma membrane. Part of a signaling pathway that regulates actin cytoskeleton remodeling. Required for the maintenance and dynamic remodeling of actin structures as well as in endocytosis, having a major impact on ligand-induced EGFR internalization and degradation. Participates in regulation of cortical and submembraneous actin by hydrolyzing PtdIns(3,4,5)P3 thereby regulating membrane ruffling. Regulates cell adhesion and cell spreading. Required for HGF-mediated lamellipodium formation, cell scattering and spreading. Acts as a negative regulator of EPHA2 receptor endocytosis by inhibiting via PI3K-dependent Rac1 activation. Acts as a regulator of neuritogenesis by regulating PtdIns(3,4,5)P3 level and is required to form an initial protrusive pattern, and later, maintain proper neurite outgrowth. Acts as a negative regulator of the FC-gamma-RIIA receptor (FCGR2A). Mediates signaling from the FC-gamma-RIIB receptor (FCGR2B), playing a central role in terminating signal transduction from activating immune/hematopoietic cell receptor systems. Involved in EGF signaling pathway. Upon stimulation by EGF, it is recruited by EGFR and dephosphorylates PtdIns(3,4,5)P3. Plays a negative role in regulating the PI3K-PKB pathway, possibly by inhibiting PKB activity. Down-regulates Fc-gamma-R-mediated phagocytosis in macrophages independently of INPP5D/SHIP1. In macrophages, down-regulates NF-kappa-B-dependent gene transcription by regulating macrophage colony-stimulating factor (M-CSF)-induced signaling. Plays a role in the localization of AURKA and NEDD9/HEF1 to the basolateral membrane at interphase in polarized cysts, thereby mediates cell cycle homeostasis, cell polarization and cilia assembly. Additionally promotion of cilia growth is also facilitated by hydrolysis of (PtdIns(3,4,5)P3) to PtdIns(3,4)P2. Promotes formation of apical membrane-initiation sites during the initial stages of lumen formation via Rho family-induced actin filament organization and CTNNB1 localization to cell-cell contacts. May also hydrolyze PtdIns(1,3,4,5)P4, and could thus affect the levels of the higher inositol polyphosphates like InsP6. Involved in endochondral ossification. This chain is Phosphatidylinositol 3,4,5-trisphosphate 5-phosphatase 2, found in Rattus norvegicus (Rat).